The sequence spans 394 residues: Elongation factor Tu 1 (394 aa).

In terms of domain architecture, tr-type G spans 10–204 (KPHVNVGTIG…ALDNYIPEPE (195 aa)). Positions 19–26 (GHVDHGKT) are G1. Position 19–26 (19–26 (GHVDHGKT)) interacts with GTP. Residue T26 coordinates Mg(2+). Residues 60 to 64 (GITIS) form a G2 region. A G3 region spans residues 81-84 (DCPG). GTP is bound by residues 81–85 (DCPGH) and 136–139 (NKCD). The segment at 136-139 (NKCD) is G4. A G5 region spans residues 174-176 (SAL).

This sequence belongs to the TRAFAC class translation factor GTPase superfamily. Classic translation factor GTPase family. EF-Tu/EF-1A subfamily. In terms of assembly, monomer.

It localises to the cytoplasm. It carries out the reaction GTP + H2O = GDP + phosphate + H(+). In terms of biological role, GTP hydrolase that promotes the GTP-dependent binding of aminoacyl-tRNA to the A-site of ribosomes during protein biosynthesis. The chain is Elongation factor Tu 1 from Photobacterium profundum (strain SS9).